A 104-amino-acid polypeptide reads, in one-letter code: Large ribosomal subunit protein bL21 (104 aa).

Belongs to the bacterial ribosomal protein bL21 family. In terms of assembly, part of the 50S ribosomal subunit. Contacts protein L20.

In terms of biological role, this protein binds to 23S rRNA in the presence of protein L20. This chain is Large ribosomal subunit protein bL21, found in Helicobacter pylori (strain P12).